Reading from the N-terminus, the 416-residue chain is Probable glucan 1,3-beta-glucosidase A (416 aa).

The N-terminal stretch at 1 to 22 (MIFKFSQKALVALYLVVGLAEA) is a signal peptide. Catalysis depends on E211, which acts as the Proton donor. 2 disulfides stabilise this stretch: C291/C415 and C316/C342. E308 functions as the Nucleophile in the catalytic mechanism. An N-linked (GlcNAc...) asparagine glycan is attached at N344.

Belongs to the glycosyl hydrolase 5 (cellulase A) family. Monomer. Mn(2+) is required as a cofactor.

It is found in the secreted. The catalysed reaction is Successive hydrolysis of beta-D-glucose units from the non-reducing ends of (1-&gt;3)-beta-D-glucans, releasing alpha-glucose.. In terms of biological role, beta-glucanases participate in the metabolism of beta-glucan, the main structural component of the cell wall. It could also function biosynthetically as a transglycosylase. This is Probable glucan 1,3-beta-glucosidase A (exgA) from Aspergillus fumigatus (strain CBS 144.89 / FGSC A1163 / CEA10) (Neosartorya fumigata).